Consider the following 373-residue polypeptide: Histidinol-phosphate aminotransferase (373 aa).

Lys230 carries the N6-(pyridoxal phosphate)lysine modification.

The protein belongs to the class-II pyridoxal-phosphate-dependent aminotransferase family. Histidinol-phosphate aminotransferase subfamily. As to quaternary structure, homodimer. The cofactor is pyridoxal 5'-phosphate.

The catalysed reaction is L-histidinol phosphate + 2-oxoglutarate = 3-(imidazol-4-yl)-2-oxopropyl phosphate + L-glutamate. Its pathway is amino-acid biosynthesis; L-histidine biosynthesis; L-histidine from 5-phospho-alpha-D-ribose 1-diphosphate: step 7/9. This chain is Histidinol-phosphate aminotransferase, found in Synechococcus sp. (strain ATCC 27144 / PCC 6301 / SAUG 1402/1) (Anacystis nidulans).